The following is a 237-amino-acid chain: Phosphoadenosine 5'-phosphosulfate reductase (237 aa).

Residue Cys-231 is the Nucleophile; cysteine thiosulfonate intermediate of the active site.

This sequence belongs to the PAPS reductase family. CysH subfamily.

Its subcellular location is the cytoplasm. It carries out the reaction [thioredoxin]-disulfide + sulfite + adenosine 3',5'-bisphosphate + 2 H(+) = [thioredoxin]-dithiol + 3'-phosphoadenylyl sulfate. The protein operates within sulfur metabolism; hydrogen sulfide biosynthesis; sulfite from sulfate: step 3/3. Its function is as follows. Catalyzes the formation of sulfite from phosphoadenosine 5'-phosphosulfate (PAPS) using thioredoxin as an electron donor. In Xylella fastidiosa (strain 9a5c), this protein is Phosphoadenosine 5'-phosphosulfate reductase.